Consider the following 258-residue polypeptide: Hydroxyacylglutathione hydrolase (258 aa).

H52, H54, D56, H57, H109, D126, and H164 together coordinate Zn(2+).

This sequence belongs to the metallo-beta-lactamase superfamily. Glyoxalase II family. Monomer. It depends on Zn(2+) as a cofactor.

It carries out the reaction an S-(2-hydroxyacyl)glutathione + H2O = a 2-hydroxy carboxylate + glutathione + H(+). It functions in the pathway secondary metabolite metabolism; methylglyoxal degradation; (R)-lactate from methylglyoxal: step 2/2. Functionally, thiolesterase that catalyzes the hydrolysis of S-D-lactoyl-glutathione to form glutathione and D-lactic acid. The polypeptide is Hydroxyacylglutathione hydrolase (Xylella fastidiosa (strain M12)).